Consider the following 502-residue polypeptide: Maturase K (502 aa).

Belongs to the intron maturase 2 family. MatK subfamily.

The protein localises to the plastid. The protein resides in the chloroplast. Functionally, usually encoded in the trnK tRNA gene intron. Probably assists in splicing its own and other chloroplast group II introns. In Brassica campestris (Field mustard), this protein is Maturase K.